A 394-amino-acid polypeptide reads, in one-letter code: Aspergillopepsin-1 (394 aa).

Residues 1–20 (MVVFSKTAALVLGLSSAVSA) form the signal peptide. A propeptide spans 21–69 (APAPTRKGFTINQIARPANKTRTINLPGMYARSLAKFGGTVPQSVKEAA) (activation peptide). The 307-residue stretch at 85 to 391 (YLTPVTVGKS…NSEGPKLGFA (307 aa)) folds into the Peptidase A1 domain. Active-site residues include aspartate 101 and aspartate 283. A disulfide bridge connects residues cysteine 319 and cysteine 354.

This sequence belongs to the peptidase A1 family. In terms of assembly, monomer.

Its subcellular location is the secreted. It carries out the reaction Hydrolysis of proteins with broad specificity. Generally favors hydrophobic residues in P1 and P1', but also accepts Lys in P1, which leads to activation of trypsinogen. Does not clot milk.. In terms of biological role, secreted aspartic endopeptidase that allows assimilation of proteinaceous substrates. The scissile peptide bond is attacked by a nucleophilic water molecule activated by two aspartic residues in the active site. Shows a broad primary substrate specificity. Favors hydrophobic residues at the P1 and P1' positions, but also accepts a lysine residue in the P1 position, leading to the activation of trypsinogen and chymotrypsinogen A. The sequence is that of Aspergillopepsin-1 (pepA) from Aspergillus niger (strain ATCC MYA-4892 / CBS 513.88 / FGSC A1513).